The chain runs to 64 residues: Putative neurotoxin-G (64 aa).

An N-terminal signal peptide occupies residues 1-19; that stretch reads MFAMVTVTVLLLISSGIFC. Disulfide bonds link Cys25/Cys45, Cys32/Cys54, and Cys36/Cys56.

As to expression, expressed by the venom gland.

The protein localises to the secreted. The protein is Putative neurotoxin-G of Lychas mucronatus (Chinese swimming scorpion).